Here is a 248-residue protein sequence, read N- to C-terminus: MLHSKRREYTANNQDVTYTELKTCKSPWKHRIPTVKQSPVVLCEEQLKYGELTFHRTPQPQPRKQAMGRKRQGPKSTVWRVVTGMLGALCVVLMTTTGILLPKLFSSQEEQCRKTSLHPLRCPKDDASCDLCSSDWIAFGNNFYCVFKENTKTWAESQSACEELNSHLVIIDSKAEVENLLLFEMDGWILHKMDGTNSSWLWRNDIKIQNTLTNDSEKKNHSCHYLRGNLFMPDECSAKKSYICEFNI.

The Cytoplasmic portion of the chain corresponds to M1–R80. 2 short sequence motifs (ITIM motif) span residues V16 to L21 and L47 to L52. The helical; Signal-anchor for type II membrane protein transmembrane segment at V81–L101 threads the bilayer. The Extracellular segment spans residues P102–I248. 3 disulfides stabilise this stretch: C132/C145, C161/C244, and C223/C236. One can recognise a C-type lectin domain in the interval F139–E245. N197, N214, and N220 each carry an N-linked (GlcNAc...) asparagine glycan.

Heterodimer with KLRE1. Interacts with PTPN6. In terms of tissue distribution, expressed in natural killer (NK) cells.

Its subcellular location is the cell membrane. Functionally, lectin-like receptor for natural killer (NK) cells. Heterodimer formation with KLRE1 mediates inhibition of NK cell cytolytic activity. This Mus musculus (Mouse) protein is Killer cell lectin-like receptor subfamily I member 1.